Consider the following 427-residue polypeptide: 3-phosphoshikimate 1-carboxyvinyltransferase (427 aa).

3-phosphoshikimate contacts are provided by Lys22, Ser23, and Arg27. Lys22 contacts phosphoenolpyruvate. The phosphoenolpyruvate site is built by Gly96 and Arg124. Positions 169, 170, 171, 197, 313, 336, and 340 each coordinate 3-phosphoshikimate. Residue Gln171 participates in phosphoenolpyruvate binding. Residue Asp313 is the Proton acceptor of the active site. Arg344, Arg386, and Lys411 together coordinate phosphoenolpyruvate.

Belongs to the EPSP synthase family. Monomer.

It localises to the cytoplasm. The enzyme catalyses 3-phosphoshikimate + phosphoenolpyruvate = 5-O-(1-carboxyvinyl)-3-phosphoshikimate + phosphate. The protein operates within metabolic intermediate biosynthesis; chorismate biosynthesis; chorismate from D-erythrose 4-phosphate and phosphoenolpyruvate: step 6/7. In terms of biological role, catalyzes the transfer of the enolpyruvyl moiety of phosphoenolpyruvate (PEP) to the 5-hydroxyl of shikimate-3-phosphate (S3P) to produce enolpyruvyl shikimate-3-phosphate and inorganic phosphate. This chain is 3-phosphoshikimate 1-carboxyvinyltransferase, found in Citrobacter koseri (strain ATCC BAA-895 / CDC 4225-83 / SGSC4696).